The primary structure comprises 83 residues: Normal mucosa of esophagus-specific gene 1 protein (83 aa).

The protein belongs to the complex I NDUFA4 subunit family. In terms of tissue distribution, strongly expressed in vertebrae, brain, intestine and stomach.

Its subcellular location is the nucleus. In Mus musculus (Mouse), this protein is Normal mucosa of esophagus-specific gene 1 protein (Nmes1).